A 170-amino-acid chain; its full sequence is Protein ECM34 (170 aa).

An N-linked (GlcNAc...) asparagine glycan is attached at Asn45. A run of 2 helical transmembrane segments spans residues 51–71 (IWLL…GIGG) and 98–118 (TIVI…FKMY).

This sequence belongs to the DUP/COS family.

The protein resides in the membrane. Functionally, may be involved in cell wall organization and biogenesis. This chain is Protein ECM34 (ECM34), found in Saccharomyces cerevisiae (strain ATCC 204508 / S288c) (Baker's yeast).